The sequence spans 197 residues: UPF0637 protein LEUM_0496 (197 aa).

Belongs to the UPF0637 family.

The sequence is that of UPF0637 protein LEUM_0496 from Leuconostoc mesenteroides subsp. mesenteroides (strain ATCC 8293 / DSM 20343 / BCRC 11652 / CCM 1803 / JCM 6124 / NCDO 523 / NBRC 100496 / NCIMB 8023 / NCTC 12954 / NRRL B-1118 / 37Y).